We begin with the raw amino-acid sequence, 306 residues long: D-alanine--D-alanine ligase (306 aa).

An ATP-grasp domain is found at Lys102–Glu300. Pro128 to Thr183 contacts ATP. Mg(2+)-binding residues include Asp252, Glu267, and Asn269.

This sequence belongs to the D-alanine--D-alanine ligase family. The cofactor is Mg(2+). Mn(2+) is required as a cofactor.

The protein resides in the cytoplasm. The catalysed reaction is 2 D-alanine + ATP = D-alanyl-D-alanine + ADP + phosphate + H(+). It functions in the pathway cell wall biogenesis; peptidoglycan biosynthesis. Its function is as follows. Cell wall formation. The chain is D-alanine--D-alanine ligase from Sinorhizobium fredii (strain NBRC 101917 / NGR234).